The chain runs to 156 residues: Transcription elongation factor GreA (156 aa).

Residues 2-27 (EKTFPMTKEGLDKLKAELENLKLVKR) are a coiled coil.

The protein belongs to the GreA/GreB family.

Necessary for efficient RNA polymerase transcription elongation past template-encoded arresting sites. The arresting sites in DNA have the property of trapping a certain fraction of elongating RNA polymerases that pass through, resulting in locked ternary complexes. Cleavage of the nascent transcript by cleavage factors such as GreA or GreB allows the resumption of elongation from the new 3'terminus. GreA releases sequences of 2 to 3 nucleotides. This Lactococcus lactis subsp. cremoris (strain MG1363) protein is Transcription elongation factor GreA.